The primary structure comprises 458 residues: Cysteine protease ATG4C (458 aa).

M1 carries the post-translational modification N-acetylmethionine. Catalysis depends on C111, which acts as the Nucleophile. Active-site residues include D345 and H347. S451 carries the post-translational modification Phosphoserine. At T452 the chain carries Phosphothreonine.

Belongs to the peptidase C54 family.

It localises to the cytoplasm. The enzyme catalyses [protein]-C-terminal L-amino acid-glycyl-phosphatidylethanolamide + H2O = [protein]-C-terminal L-amino acid-glycine + a 1,2-diacyl-sn-glycero-3-phosphoethanolamine. Inhibited by N-ethylmaleimide. Its function is as follows. Cysteine protease that plays a key role in autophagy by mediating both proteolytic activation and delipidation of ATG8 family proteins. The protease activity is required for proteolytic activation of ATG8 family proteins: cleaves the C-terminal amino acid of ATG8 proteins MAP1LC3 and GABARAPL2, to reveal a C-terminal glycine. Exposure of the glycine at the C-terminus is essential for ATG8 proteins conjugation to phosphatidylethanolamine (PE) and insertion to membranes, which is necessary for autophagy. In addition to the protease activity, also mediates delipidation of ATG8 family proteins. Catalyzes delipidation of PE-conjugated forms of ATG8 proteins during macroautophagy. Compared to ATG4B, the major protein for proteolytic activation of ATG8 proteins, shows weaker ability to cleave the C-terminal amino acid of ATG8 proteins, while it displays stronger delipidation activity. In contrast to other members of the family, weakly or not involved in phagophore growth during mitophagy. The polypeptide is Cysteine protease ATG4C (Homo sapiens (Human)).